The following is a 502-amino-acid chain: Tyrosine-protein kinase receptor old-1 (502 aa).

An N-terminal signal peptide occupies residues 1–19; sequence MKGTLIFVVFYSSYGFAHC. Topologically, residues 20–58 are extracellular; it reads NTILRSSSLSRNFEDSLRRIPRSTDKDETGFEDSNVQEV. A helical membrane pass occupies residues 59 to 79; that stretch reads IFILLYCLFVALAILICGLII. At 80 to 502 the chain is on the cytoplasmic side; it reads FYNSRKRELR…WLSDEKHCDS (423 aa). The interval 99–140 is disordered; sequence LLEPTSADHKRRNSSNIVPPEPTPYPITSGESDLRQTPSRLS. Positions 127-140 are enriched in polar residues; that stretch reads SGESDLRQTPSRLS. In terms of domain architecture, Protein kinase spans 175–473; that stretch reads ISKGRPLGSG…ELKTTSNEYF (299 aa). ATP-binding positions include 181 to 189 and K213; that span reads LGSGEFGII. D321 acts as the Proton acceptor in catalysis.

This sequence belongs to the protein kinase superfamily. Tyr protein kinase family.

Its subcellular location is the cell membrane. The catalysed reaction is L-tyrosyl-[protein] + ATP = O-phospho-L-tyrosyl-[protein] + ADP + H(+). Its function is as follows. Receptor tyrosine kinase which plays a role in promoting longevity and resistance to stresses including UV irradiation and high temperatures, probably downstream of daf-16. This is Tyrosine-protein kinase receptor old-1 from Caenorhabditis elegans.